A 483-amino-acid chain; its full sequence is Proline--tRNA ligase (483 aa).

This sequence belongs to the class-II aminoacyl-tRNA synthetase family. ProS type 3 subfamily. Homodimer.

It is found in the cytoplasm. It catalyses the reaction tRNA(Pro) + L-proline + ATP = L-prolyl-tRNA(Pro) + AMP + diphosphate. Its function is as follows. Catalyzes the attachment of proline to tRNA(Pro) in a two-step reaction: proline is first activated by ATP to form Pro-AMP and then transferred to the acceptor end of tRNA(Pro). In Natranaerobius thermophilus (strain ATCC BAA-1301 / DSM 18059 / JW/NM-WN-LF), this protein is Proline--tRNA ligase.